A 173-amino-acid chain; its full sequence is NADH-ubiquinone oxidoreductase chain 6 (173 aa).

Transmembrane regions (helical) follow at residues 12–32, 47–67, 94–114, and 142–162; these read VFWLIGVSSNISVYYGVVSLV, GSFLALVLFLIYLGGMLVIFA, VVLAVVFVLVGWGWWGVGECG, and GALMMAMFGLFLTFFIVLVLV.

This sequence belongs to the complex I subunit 6 family.

It is found in the mitochondrion membrane. It carries out the reaction a ubiquinone + NADH + 5 H(+)(in) = a ubiquinol + NAD(+) + 4 H(+)(out). Functionally, core subunit of the mitochondrial membrane respiratory chain NADH dehydrogenase (Complex I) that is believed to belong to the minimal assembly required for catalysis. Complex I functions in the transfer of electrons from NADH to the respiratory chain. The immediate electron acceptor for the enzyme is believed to be ubiquinone. This Pelomedusa subrufa (African side-necked turtle) protein is NADH-ubiquinone oxidoreductase chain 6 (MT-ND6).